We begin with the raw amino-acid sequence, 436 residues long: Histidine--tRNA ligase (436 aa).

The protein belongs to the class-II aminoacyl-tRNA synthetase family. Homodimer.

Its subcellular location is the cytoplasm. It catalyses the reaction tRNA(His) + L-histidine + ATP = L-histidyl-tRNA(His) + AMP + diphosphate + H(+). This Prochlorococcus marinus (strain MIT 9303) protein is Histidine--tRNA ligase.